We begin with the raw amino-acid sequence, 228 residues long: Cytochrome P450 monooxygenase ataY (228 aa).

Cysteine 216 is a binding site for heme.

It belongs to the cytochrome P450 family. Heme serves as cofactor.

It participates in mycotoxin biosynthesis. Its function is as follows. Cytochrome P450 monooxygenase; part of the gene cluster that mediates the biosynthesis of acetylaranotin, a member of the epipolythiodioxopiperazine (ETP) class of toxins characterized by a disulfide-bridged cyclic dipeptide. The first step of acetylaranotin biosynthesis is performed by the NRPS ataP which produces diketopiperazine cyclo-L-Phe-L-Phe via the condensation of 2 phenylalanines (L-Phe). The ataC domain of ataTC then catalyzes the formation of bishydroxylation of cyclo-L-Phe-L-Phe. The glutathione S-transferase domain ataG in ataIMG further catalyzes the conjugation of two glutathiones to the bishydroxylated intermediate. Next, the dipeptidase ataJ removes the Glu residues. The following step is performed by the carbon sulfur lyase domain ataI of ataIMG which may convert the bis-cysteinyl adduct to yield an epidithiol intermediate. The ataT domain from ataTC then catalyzes the oxidation of the free dithiols, followed by a cyclization step catalyzed by the cytochrome P450 ataF. AtaF probably acts as an epoxidase to promote a dual epoxidation formation at C8 and C9 along with C8' and C9', followed by the spontaneous nucleophilic attack of the amide nitrogens N10 and N10' to yield an intermediate with the pyrrolidine partial structure. The final steps of acetylaranotin biosynthesis involve the acetylation and ring rearrangement of an epitetrathiodiketopiperazine intermediate to produce acetylaranotin. AtaH probably catalyzes the acetylation of epitetrathiodiketopiperazine to produce a diacetate and ataY is responsible for the formation of the dihydrooxepin moiety that converts the diacetate intermediate to acetylaranotin via acetylapoaranotin. Both enzymes could function independently in the absence of the other. The acetylaranotin bis-thiomethyltransferase ataS located outside of acetylaranotin gene cluster is the main thiomethyltransferase responsible for converting acetylaranotin and its related intermediates to their methylated forms. The protein is Cytochrome P450 monooxygenase ataY of Aspergillus terreus (strain NIH 2624 / FGSC A1156).